A 174-amino-acid polypeptide reads, in one-letter code: NADH-ubiquinone oxidoreductase chain 6 (174 aa).

Transmembrane regions (helical) follow at residues 1 to 21, 24 to 44, 47 to 67, 86 to 106, 111 to 131, and 151 to 171; these read MTYALFLLSVSLVMGFVGFSS, SPIYGGLVLIVSGVVGCAIIL, GGGYMGLMVFLIYLGGMMVVF, VEVLVSVLVGLAMEVGLVLWV, GMVVVVNFNSVGSWMIYEGEG, and WLVVVTGWTLFVGVYIVIEIA.

The protein belongs to the complex I subunit 6 family. In terms of assembly, core subunit of respiratory chain NADH dehydrogenase (Complex I) which is composed of 45 different subunits.

It is found in the mitochondrion inner membrane. It carries out the reaction a ubiquinone + NADH + 5 H(+)(in) = a ubiquinol + NAD(+) + 4 H(+)(out). In terms of biological role, core subunit of the mitochondrial membrane respiratory chain NADH dehydrogenase (Complex I) which catalyzes electron transfer from NADH through the respiratory chain, using ubiquinone as an electron acceptor. Essential for the catalytic activity and assembly of complex I. The protein is NADH-ubiquinone oxidoreductase chain 6 (MT-ND6) of Pan troglodytes (Chimpanzee).